A 282-amino-acid polypeptide reads, in one-letter code: Formamidopyrimidine-DNA glycosylase (282 aa).

Pro2 serves as the catalytic Schiff-base intermediate with DNA. The Proton donor role is filled by Glu3. Lys61 (proton donor; for beta-elimination activity) is an active-site residue. Residues His93, Arg112, and Lys158 each coordinate DNA. The FPG-type zinc finger occupies 244 to 278 (DAYGREGEPCRRCGAIMRRDKFMNRSSFYCPRCQP). Catalysis depends on Arg268, which acts as the Proton donor; for delta-elimination activity.

It belongs to the FPG family. In terms of assembly, monomer. Requires Zn(2+) as cofactor.

The catalysed reaction is Hydrolysis of DNA containing ring-opened 7-methylguanine residues, releasing 2,6-diamino-4-hydroxy-5-(N-methyl)formamidopyrimidine.. It carries out the reaction 2'-deoxyribonucleotide-(2'-deoxyribose 5'-phosphate)-2'-deoxyribonucleotide-DNA = a 3'-end 2'-deoxyribonucleotide-(2,3-dehydro-2,3-deoxyribose 5'-phosphate)-DNA + a 5'-end 5'-phospho-2'-deoxyribonucleoside-DNA + H(+). In terms of biological role, involved in base excision repair of DNA damaged by oxidation or by mutagenic agents. Acts as a DNA glycosylase that recognizes and removes damaged bases. Has a preference for oxidized purines, such as 7,8-dihydro-8-oxoguanine (8-oxoG). Has AP (apurinic/apyrimidinic) lyase activity and introduces nicks in the DNA strand. Cleaves the DNA backbone by beta-delta elimination to generate a single-strand break at the site of the removed base with both 3'- and 5'-phosphates. In Mycolicibacterium gilvum (strain PYR-GCK) (Mycobacterium gilvum (strain PYR-GCK)), this protein is Formamidopyrimidine-DNA glycosylase.